The sequence spans 117 residues: 16 kDa protein (117 aa).

The chain is 16 kDa protein from Tobacco rattle virus (strain PLB).